A 407-amino-acid polypeptide reads, in one-letter code: Lysosome-associated membrane glycoprotein 1 (407 aa).

A signal peptide spans 1–21 (MAAPGAPRSLLLLLLAGLAHG). The interval 22-189 (ASALFVVKDS…SKEETRCTQD (168 aa)) is first lumenal domain. The Lumenal portion of the chain corresponds to 22 to 371 (ASALFVVKDS…VEECMQDGNN (350 aa)). 12 N-linked (GlcNAc...) asparagine glycosylation sites follow: asparagine 32, asparagine 40, asparagine 57, asparagine 72, asparagine 79, asparagine 98, asparagine 102, asparagine 116, asparagine 125, asparagine 145, asparagine 160, and asparagine 178. Cysteine 36 and cysteine 75 are oxidised to a cystine. The cysteines at positions 150 and 186 are disulfide-linked. The tract at residues 183–206 (ETRCTQDGPSPTTVPPSPSPPLVP) is disordered. Residues 190-219 (GPSPTTVPPSPSPPLVPTNPTVIKYNVTGE) form a hinge region. Pro residues predominate over residues 194–206 (TTVPPSPSPPLVP). 9 N-linked (GlcNAc...) asparagine glycosylation sites follow: asparagine 215, asparagine 220, asparagine 233, asparagine 241, asparagine 253, asparagine 283, asparagine 297, asparagine 304, and asparagine 312. The second lumenal domain stretch occupies residues 220-371 (NGTCLLASMA…VEECMQDGNN (152 aa)). Cysteine 223 and cysteine 260 form a disulfide bridge. Cysteine 328 and cysteine 365 are disulfide-bonded. A helical transmembrane segment spans residues 372 to 395 (MLIPIAVGGALAGLVLIVLIAYLI). Topologically, residues 396 to 407 (GRKRSHAGYQTI) are cytoplasmic.

Belongs to the LAMP family. Interacts with ABCB9; this interaction strongly stabilizes ABCB9 and protects ABCB9 against lysosomal degradation. Interacts with FURIN. Interacts with TMEM175; inhibiting the proton channel activity of TMEM175. In terms of processing, O- and N-glycosylated; some of the N-glycans attached to LAMP-1 are polylactosaminoglycans.

The protein resides in the lysosome membrane. It is found in the endosome membrane. The protein localises to the late endosome membrane. Its subcellular location is the cell membrane. It localises to the cytolytic granule membrane. Functionally, lysosomal membrane glycoprotein which plays an important role in lysosome biogenesis, lysosomal pH regulation, autophagy and cholesterol homeostasis. Acts as an important regulator of lysosomal lumen pH regulation by acting as a direct inhibitor of the proton channel TMEM175, facilitating lysosomal acidification for optimal hydrolase activity. Also plays an important role in NK-cells cytotoxicity. Mechanistically, participates in cytotoxic granule movement to the cell surface and perforin trafficking to the lytic granule. In addition, protects NK-cells from degranulation-associated damage induced by their own cytotoxic granule content. Presents carbohydrate ligands to selectins. This Cricetulus griseus (Chinese hamster) protein is Lysosome-associated membrane glycoprotein 1 (LAMP1).